A 493-amino-acid chain; its full sequence is Glutamyl-tRNA(Gln) amidotransferase subunit A (493 aa).

Residues lysine 78 and serine 158 each act as charge relay system in the active site. Serine 182 serves as the catalytic Acyl-ester intermediate.

This sequence belongs to the amidase family. GatA subfamily. In terms of assembly, heterotrimer of A, B and C subunits.

It catalyses the reaction L-glutamyl-tRNA(Gln) + L-glutamine + ATP + H2O = L-glutaminyl-tRNA(Gln) + L-glutamate + ADP + phosphate + H(+). Functionally, allows the formation of correctly charged Gln-tRNA(Gln) through the transamidation of misacylated Glu-tRNA(Gln) in organisms which lack glutaminyl-tRNA synthetase. The reaction takes place in the presence of glutamine and ATP through an activated gamma-phospho-Glu-tRNA(Gln). The sequence is that of Glutamyl-tRNA(Gln) amidotransferase subunit A from Rickettsia bellii (strain RML369-C).